A 211-amino-acid chain; its full sequence is Heat shock 70 kDa protein 4L (211 aa).

Residue Ser161 is modified to Phosphoserine.

Belongs to the heat shock protein 70 family. As to quaternary structure, homodimer.

Its subcellular location is the cytoplasm. It localises to the nucleus. Its function is as follows. Possesses chaperone activity in vitro where it inhibits aggregation of citrate synthase. The protein is Heat shock 70 kDa protein 4L of Mesocricetus auratus (Golden hamster).